Here is a 123-residue protein sequence, read N- to C-terminus: UPF0102 protein MCA0184 (123 aa).

It belongs to the UPF0102 family.

The chain is UPF0102 protein MCA0184 from Methylococcus capsulatus (strain ATCC 33009 / NCIMB 11132 / Bath).